A 395-amino-acid polypeptide reads, in one-letter code: Extracellular cysteine protease (395 aa).

An N-terminal signal peptide occupies residues 1–30 (MKKKLSYMITIMLAFTLSLALGLFFNSAHA). A propeptide spanning residues 31–221 (DSLPQKNGAN…TLEYQSTRNE (191 aa)) is cleaved from the precursor. Active-site residues include Cys-245, His-341, and Asn-362.

It belongs to the peptidase C47 family. Proteolytically cleaved.

The protein localises to the secreted. It localises to the cell wall. Cysteine protease able to cleave elastin, insulin, myoglobin, fibronectin, fibrinogen, HMW-kininogen, alpha-1-protease inhibitor and alpha-1-antitrypsin. Along with other extracellular proteases may contribute to the colonization and infection of human tissues. This is Extracellular cysteine protease (ecpA) from Staphylococcus epidermidis (strain ATCC 35984 / DSM 28319 / BCRC 17069 / CCUG 31568 / BM 3577 / RP62A).